Here is a 1254-residue protein sequence, read N- to C-terminus: Structural polyprotein (1254 aa).

The segment at 1-33 (MFPFQPMYPMQPMPYRNPFAAPRRPWFPRTDPF) is necessary for nucleocapsid assembly and virus assembly. The tract at residues 33–68 (FLAMQVQELTRSMANLTFKQRRDAPPEGPSAKKPKK) is host transcription inhibition. A Supraphysiological nuclear export signal motif is present at residues 41 to 48 (LTRSMANL). The segment at 45-119 (MANLTFKQRR…KKPGKRQRMV (75 aa)) is disordered. A Nuclear localization signal motif is present at residues 64–68 (KKPKK). Residues 80-92 (GKKKKNQGKKKAK) show a composition bias toward basic residues. The binding to the viral RNA stretch occupies residues 91–127 (AKTGPPNPKAQNGNKKKTNKKPGKRQRMVMKLESDKT). Phosphothreonine is present on residues T93 and T108. A compositionally biased stretch (basic residues) spans 104 to 118 (NKKKTNKKPGKRQRM). Residues 112-126 (PGKRQRMVMKLESDK) are ribosome-binding. S124 bears the Phosphoserine mark. The Peptidase S3 domain maps to 126–275 (KTFPIMLEGK…KYTPENCEQW (150 aa)). Phosphothreonine is present on T127. Active-site charge relay system residues include H152, D174, and S226. The segment at 276 to 287 (SLVTTMCLLANV) is functions as an uncleaved signal peptide for the precursor of protein E3/E2. The Extracellular segment spans residues 276 to 701 (SLVTTMCLLA…HYYHRYPMST (426 aa)). N286, N546, and N652 each carry an N-linked (GlcNAc...) asparagine; by host glycan. Residues 702–722 (ILGLSICAAIATVSVAASTWL) traverse the membrane as a helical segment. The Cytoplasmic portion of the chain corresponds to 723-757 (FCRSRVACLTPYRLTPNARIPFCLAVLCCARTARA). Residues C730, C750, and C751 are each lipidated (S-palmitoyl cysteine; by host). Positions 730–750 (CLTPYRLTPNARIPFCLAVLC) are transient transmembrane before p62-6K protein processing. Residues 758–772 (ETTWESLDHLWNNNQ) lie on the Extracellular side of the membrane. The chain crosses the membrane as a helical span at residues 773 to 793 (QMFWIQLLIPLAALIVVTRLL). Residues 794–795 (RC) lie on the Cytoplasmic side of the membrane. A helical membrane pass occupies residues 796-816 (VCCVVPFLVMAGAAAGAYEHA). Residues 817 to 1224 (TTMPSQAGIS…SKTAWTWLTS (408 aa)) are Extracellular-facing. Intrachain disulfides connect C861–C926, C874–C906, C875–C908, and C880–C890. Positions 896-913 (VYPFMWGGAYCFCDTENT) are E1 fusion peptide loop. An N-linked (GlcNAc...) asparagine; by host glycan is attached at N946. 4 cysteine pairs are disulfide-bonded: C1071-C1083, C1113-C1188, C1118-C1192, and C1140-C1182. The chain crosses the membrane as a helical span at residues 1225–1245 (LLGGSAVIIIIGLVLATIVAM). Residues 1246 to 1254 (YVLTNQKHN) are Cytoplasmic-facing.

As to quaternary structure, homodimer. Homomultimer. Interacts with host karyopherin KPNA4; this interaction allows the nuclear import of the viral capsid protein. Interacts with spike glycoprotein E2. Interacts with host IRAK1; the interaction leads to inhibition of IRAK1-dependent signaling. Part of a tetrameric complex composed of host CRM1, host importin alpha/beta dimer and the viral capsid; this complex blocks the receptor-mediated transport through the nuclear pore. Interacts with host phosphatase PPP1CA; this interaction dephosphorylates the capsid protein, which increases its ability to bind to the viral genome. In terms of assembly, the precursor of protein E3/E2 and E1 form a heterodimer shortly after synthesis. Interacts with spike glycoprotein E2. The precursor of protein E3/E2 and E1 form a heterodimer shortly after synthesis. Processing of the precursor of protein E3/E2 into E2 and E3 results in a heterodimer of the spike glycoproteins E2 and E1. Spike at virion surface are constituted of three E2-E1 heterodimers. After target cell attachment and endocytosis, E1 change conformation to form homotrimers. Interacts with 6K protein. Interacts with host LDLRAD3; this interaction mediates viral entry to the host cell. As to quaternary structure, interacts with spike glycoprotein E1. Processing of the precursor of protein E3/E2 into E2 and E3 results in a heterodimer of the spike glycoproteins E2 and E1. Spike at virion surface are constituted of a trimer of E2-E1 heterodimers. Interacts with 6K protein. Interacts with host LDLRAD3; this interaction mediates viral entry to the host cell. In terms of assembly, oligomer. Interacts with spike glycoprotein E1. Interacts with spike glycoprotein E2. Structural polyprotein: Specific enzymatic cleavages in vivo yield mature proteins. Capsid protein is auto-cleaved during polyprotein translation, unmasking a signal peptide at the N-terminus of the precursor of E3/E2. The remaining polyprotein is then targeted to the host endoplasmic reticulum, where host signal peptidase cleaves it into pE2, 6K and E1 proteins. pE2 is further processed to mature E3 and E2 by host furin in trans-Golgi vesicle. Post-translationally, palmitoylated via thioester bonds. These palmitoylations may induce disruption of the C-terminus transmembrane. This would result in the reorientation of E2 C-terminus from lumenal to cytoplasmic side. In terms of processing, phosphorylated on serine and threonine residues. N-glycosylated. Post-translationally, palmitoylated via thioester bonds.

The protein localises to the virion. The protein resides in the host cytoplasm. Its subcellular location is the host cell membrane. It localises to the host nucleus. It is found in the virion membrane. The enzyme catalyses Autocatalytic release of the core protein from the N-terminus of the togavirus structural polyprotein by hydrolysis of a -Trp-|-Ser- bond.. Its function is as follows. Forms an icosahedral capsid with a T=4 symmetry composed of 240 copies of the capsid protein surrounded by a lipid membrane through which penetrate 80 spikes composed of trimers of E1-E2 heterodimers. The capsid protein binds to the viral RNA genome at a site adjacent to a ribosome binding site for viral genome translation following genome release. Possesses a protease activity that results in its autocatalytic cleavage from the nascent structural protein. Following its self-cleavage, the capsid protein transiently associates with ribosomes, and within several minutes the protein binds to viral RNA and rapidly assembles into icosahedric core particles. The resulting nucleocapsid eventually associates with the cytoplasmic domain of the spike glycoprotein E2 at the cell membrane, leading to budding and formation of mature virions. In case of infection, new virions attach to target cells and after clathrin-mediated endocytosis their membrane fuses with the host endosomal membrane. This leads to the release of the nucleocapsid into the cytoplasm, followed by an uncoating event necessary for the genomic RNA to become accessible. The uncoating might be triggered by the interaction of capsid proteins with ribosomes. Binding of ribosomes would release the genomic RNA since the same region is genomic RNA-binding and ribosome-binding. Specifically inhibits interleukin-1 receptor-associated kinase 1/IRAK1-dependent signaling during viral entry, representing a means by which the alphaviruses may evade innate immune detection and activation prior to viral gene expression. Inhibits host transcription. Forms a tetrameric complex with XPO1/CRM1 and the nuclear import receptor importin. This complex blocks the central channel of host nuclear pores thereby inhibiting the receptor-mediated nuclear transport and thus the host mRNA and rRNA transcription. The inhibition of transcription is linked to a cytopathic effect on the host cell. Functionally, provides the signal sequence for the translocation of the precursor of protein E3/E2 to the host endoplasmic reticulum. Furin-cleaved E3 remains associated with spike glycoprotein E1 and mediates pH protection of the latter during the transport via the secretory pathway. After virion release from the host cell, the assembly protein E3 is gradually released in the extracellular space. Plays a role in viral attachment to target host cell, by binding to the cell receptor LDLRAD3. Synthesized as a p62 precursor which is processed by furin at the cell membrane just before virion budding, giving rise to E2-E1 heterodimer. The p62-E1 heterodimer is stable, whereas E2-E1 is unstable and dissociate at low pH. p62 is processed at the last step, presumably to avoid E1 fusion activation before its final export to cell surface. E2 C-terminus contains a transitory transmembrane that would be disrupted by palmitoylation, resulting in reorientation of the C-terminal tail from lumenal to cytoplasmic side. This step is critical since E2 C-terminus is involved in budding by interacting with capsid proteins. This release of E2 C-terminus in cytoplasm occurs lately in protein export, and precludes premature assembly of particles at the endoplasmic reticulum membrane. In terms of biological role, acts as a viroporin that participates in virus glycoprotein processing and transport to the plasma membrane, cell permeabilization and budding of viral particles. Disrupts the calcium homeostasis of the cell, probably at the endoplasmic reticulum level. This leads to cytoplasmic calcium elevation. Because of its lipophilic properties, the 6K protein is postulated to influence the selection of lipids that interact with the transmembrane domains of the glycoproteins, which, in turn, affects the deformability of the bilayer required for the extreme curvature that occurs as budding proceeds. Present in low amount in virions, about 3% compared to viral glycoproteins. Its function is as follows. Class II viral fusion protein. Fusion activity is inactive as long as E1 is bound to E2 in mature virion. After virus attachment to cell receptor LDLRAD3 and endocytosis, acidification of the endosome would induce dissociation of E1/E2 heterodimer and concomitant trimerization of the E1 subunits. This E1 trimer is fusion active, and promotes release of viral nucleocapsid in cytoplasm after endosome and viral membrane fusion. Efficient fusion requires the presence of cholesterol and sphingolipid in the target membrane. Fusion is optimal at levels of about 1 molecule of cholesterol per 2 molecules of phospholipids, and is specific for sterols containing a 3-beta-hydroxyl group. This Bos taurus (Bovine) protein is Structural polyprotein.